We begin with the raw amino-acid sequence, 192 residues long: Molybdenum cofactor cytidylyltransferase (192 aa).

Residue aspartate 101 coordinates Mg(2+).

Monomer. Interacts with the Moco-binding chaperone PaoD. Requires Mg(2+) as cofactor. It depends on Mn(2+) as a cofactor.

It catalyses the reaction Mo-molybdopterin + CTP + H(+) = Mo-molybdopterin cytosine dinucleotide + diphosphate. Its function is as follows. Transfers a CMP moiety from CTP to Mo-molybdopterin (Mo-MPT) cofactor (Moco or molybdenum cofactor) to form Mo-molybdopterin cytosine dinucleotide (Mo-MCD) cofactor. Is specific for CTP; other nucleotides such as ATP and GTP cannot be utilized. Is also able to convert MPT to MCD in the absence of molybdate, however, with only one catalytic turnover. In Escherichia coli (strain K12), this protein is Molybdenum cofactor cytidylyltransferase (mocA).